The following is a 311-amino-acid chain: 4-hydroxy-3-methylbut-2-enyl diphosphate reductase (311 aa).

Cys12 contributes to the [4Fe-4S] cluster binding site. (2E)-4-hydroxy-3-methylbut-2-enyl diphosphate is bound by residues His41 and His74. Dimethylallyl diphosphate contacts are provided by His41 and His74. Residues His41 and His74 each contribute to the isopentenyl diphosphate site. Cys96 provides a ligand contact to [4Fe-4S] cluster. Residue His124 coordinates (2E)-4-hydroxy-3-methylbut-2-enyl diphosphate. Dimethylallyl diphosphate is bound at residue His124. His124 is an isopentenyl diphosphate binding site. Glu126 (proton donor) is an active-site residue. Residue Thr167 participates in (2E)-4-hydroxy-3-methylbut-2-enyl diphosphate binding. Cys197 provides a ligand contact to [4Fe-4S] cluster. (2E)-4-hydroxy-3-methylbut-2-enyl diphosphate contacts are provided by Ser225, Ser226, Asn227, and Ser269. Positions 225, 226, 227, and 269 each coordinate dimethylallyl diphosphate. The isopentenyl diphosphate site is built by Ser225, Ser226, Asn227, and Ser269.

This sequence belongs to the IspH family. [4Fe-4S] cluster serves as cofactor.

It catalyses the reaction isopentenyl diphosphate + 2 oxidized [2Fe-2S]-[ferredoxin] + H2O = (2E)-4-hydroxy-3-methylbut-2-enyl diphosphate + 2 reduced [2Fe-2S]-[ferredoxin] + 2 H(+). The catalysed reaction is dimethylallyl diphosphate + 2 oxidized [2Fe-2S]-[ferredoxin] + H2O = (2E)-4-hydroxy-3-methylbut-2-enyl diphosphate + 2 reduced [2Fe-2S]-[ferredoxin] + 2 H(+). It participates in isoprenoid biosynthesis; dimethylallyl diphosphate biosynthesis; dimethylallyl diphosphate from (2E)-4-hydroxy-3-methylbutenyl diphosphate: step 1/1. It functions in the pathway isoprenoid biosynthesis; isopentenyl diphosphate biosynthesis via DXP pathway; isopentenyl diphosphate from 1-deoxy-D-xylulose 5-phosphate: step 6/6. In terms of biological role, catalyzes the conversion of 1-hydroxy-2-methyl-2-(E)-butenyl 4-diphosphate (HMBPP) into a mixture of isopentenyl diphosphate (IPP) and dimethylallyl diphosphate (DMAPP). Acts in the terminal step of the DOXP/MEP pathway for isoprenoid precursor biosynthesis. This chain is 4-hydroxy-3-methylbut-2-enyl diphosphate reductase, found in Aeromonas hydrophila subsp. hydrophila (strain ATCC 7966 / DSM 30187 / BCRC 13018 / CCUG 14551 / JCM 1027 / KCTC 2358 / NCIMB 9240 / NCTC 8049).